The sequence spans 393 residues: Short chain dehydrogenase sirQ (393 aa).

L54 serves as a coordination point for NADP(+). The active-site Proton donor is the S233. K259 acts as the Lowers pKa of active site Tyr in catalysis. A286 contacts NADP(+).

Belongs to the short-chain dehydrogenases/reductases (SDR) family. Highly divergent.

Its pathway is mycotoxin biosynthesis. Its function is as follows. Short chain dehydrogenase; part of the gene cluster that mediates the biosynthesis of sirodesmin PL, an epipolythiodioxopiperazine (ETP) characterized by a disulfide bridged cyclic dipeptide and that acts as a phytotoxin which is involved in the blackleg didease of canola. SirD catalyzes the O-prenylation of L-tyrosine (L-Tyr) in the presence of dimethylallyl diphosphate (DMAPP) to yield 4-O-dimethylallyl-L-Tyr, and therefore represents probably the first pathway-specific enzyme in the biosynthesis of sirodesmin PL. 4-O-dimethylallyl-L-Tyr, then undergoes condensation with L-Ser in a reaction catalyzed by the non-ribosomal peptide synthase sirP to form the diketopiperazine (DKP) backbone. Further bishydroxylation of the DKP performed by the cytochrome P450 monooxygenase sirC leads to the production of the intermediate phomamide. This step is essential to form the reactive thiol group required for toxicity of sirodesmin PL. The next steps of sirodesmin biosynthesis are not well understood yet, but some predictions could be made from intermediate compounds identification. Phomamide is converted into phomalizarine via oxidation, probably by sirT. Further oxidation, methylation (by sirM or sirN) and reduction steps convert phomalizarine to deacetyl sirodesmin. Finally, acetyltransferase sirH probably acetylates deacetyl sirodesmin to produce sirodesmin PL. This chain is Short chain dehydrogenase sirQ, found in Leptosphaeria maculans (Blackleg fungus).